A 465-amino-acid polypeptide reads, in one-letter code: Transposase for insertion sequence IS1202 (465 aa).

Residues 157–340 (HPSRPRKKFA…APNPSERNLI (184 aa)) form the Integrase catalytic domain.

In terms of biological role, required for the transposition of the insertion element. This is Transposase for insertion sequence IS1202 from Streptococcus pneumoniae.